Consider the following 713-residue polypeptide: Topoisomerase subunit TopoM (713 aa).

The 464-residue stretch at 41 to 504 folds into the Topo IIA-type catalytic domain; sequence IPSAYDGLKP…DATPVSRGDE (464 aa). The active-site O-(5'-phospho-DNA)-tyrosine intermediate is Tyr-128. Residues 694 to 713 are disordered; sequence NRAKASIKGSGADVTPAPAE.

It belongs to the type II topoisomerase GyrA/ParC subunit family. A complex of TopoN and TopoM, possibly a heterotetramer. Requires Mg(2+) as cofactor.

The enzyme catalyses ATP-dependent breakage, passage and rejoining of double-stranded DNA.. Inhibited by quinolone antibiotic ciprofloxacin and coumarin antibiotic novobiocin, but at much higher concentrations than is usual for DNA gyrase/topoisomerase. Catalyzes the relaxation of negatively supercoiled DNA in the presence of ATP or dATP but not other nucleotides. Individual subunits have no activity. Not able to negatively supercoil DNA, it can however introduce positive supercoils in DNA. Relaxes positive supercoils in an ATP-dependent manner. Catenates and decatenates DNA. Generates dsDNA breaks in the presence of the quinolone antibiotic ciprofloxacin, showing it is a topoisomerase. This Mycolicibacterium smegmatis (strain ATCC 700084 / mc(2)155) (Mycobacterium smegmatis) protein is Topoisomerase subunit TopoM.